The sequence spans 242 residues: Biosynthetic peptidoglycan transglycosylase (242 aa).

Residues 19–39 traverse the membrane as a helical segment; it reads ILAALAVFWGGGIALFSVVPV.

Belongs to the glycosyltransferase 51 family.

The protein localises to the cell inner membrane. The catalysed reaction is [GlcNAc-(1-&gt;4)-Mur2Ac(oyl-L-Ala-gamma-D-Glu-L-Lys-D-Ala-D-Ala)](n)-di-trans,octa-cis-undecaprenyl diphosphate + beta-D-GlcNAc-(1-&gt;4)-Mur2Ac(oyl-L-Ala-gamma-D-Glu-L-Lys-D-Ala-D-Ala)-di-trans,octa-cis-undecaprenyl diphosphate = [GlcNAc-(1-&gt;4)-Mur2Ac(oyl-L-Ala-gamma-D-Glu-L-Lys-D-Ala-D-Ala)](n+1)-di-trans,octa-cis-undecaprenyl diphosphate + di-trans,octa-cis-undecaprenyl diphosphate + H(+). Its pathway is cell wall biogenesis; peptidoglycan biosynthesis. Functionally, peptidoglycan polymerase that catalyzes glycan chain elongation from lipid-linked precursors. The protein is Biosynthetic peptidoglycan transglycosylase of Salmonella newport (strain SL254).